A 162-amino-acid polypeptide reads, in one-letter code: Regulator of sigma D (162 aa).

This sequence belongs to the Rsd/AlgQ family. Interacts with RpoD.

The protein resides in the cytoplasm. Functionally, binds RpoD and negatively regulates RpoD-mediated transcription activation by preventing the interaction between the primary sigma factor RpoD with the catalytic core of the RNA polymerase and with promoter DNA. May be involved in replacement of the RNA polymerase sigma subunit from RpoD to RpoS during the transition from exponential growth to the stationary phase. This is Regulator of sigma D from Salmonella agona (strain SL483).